Reading from the N-terminus, the 59-residue chain is Large ribosomal subunit protein uL30 (59 aa).

It belongs to the universal ribosomal protein uL30 family. In terms of assembly, part of the 50S ribosomal subunit.

The protein is Large ribosomal subunit protein uL30 of Geotalea daltonii (strain DSM 22248 / JCM 15807 / FRC-32) (Geobacter daltonii).